The primary structure comprises 435 residues: ATP-dependent protease ATPase subunit HslU (435 aa).

Residues Val-18, 60–65 (GVGKTE), Asp-248, Glu-313, and Arg-385 each bind ATP.

It belongs to the ClpX chaperone family. HslU subfamily. A double ring-shaped homohexamer of HslV is capped on each side by a ring-shaped HslU homohexamer. The assembly of the HslU/HslV complex is dependent on binding of ATP.

Its subcellular location is the cytoplasm. Functionally, ATPase subunit of a proteasome-like degradation complex; this subunit has chaperone activity. The binding of ATP and its subsequent hydrolysis by HslU are essential for unfolding of protein substrates subsequently hydrolyzed by HslV. HslU recognizes the N-terminal part of its protein substrates and unfolds these before they are guided to HslV for hydrolysis. In Parvibaculum lavamentivorans (strain DS-1 / DSM 13023 / NCIMB 13966), this protein is ATP-dependent protease ATPase subunit HslU.